The primary structure comprises 139 residues: Single-stranded DNA-binding protein 2 (139 aa).

In terms of domain architecture, SSB spans methionine 1 to glutamate 104. The segment at leucine 103–phenylalanine 139 is disordered. Residues lysine 106–asparagine 125 are compositionally biased toward low complexity. The segment covering asparagine 129–phenylalanine 139 has biased composition (acidic residues).

In terms of assembly, homotetramer.

The protein is Single-stranded DNA-binding protein 2 (ssb-p) of Staphylococcus aureus (strain COL).